The primary structure comprises 756 residues: Serine/threonine-protein kinase DCLK2 (756 aa).

The segment at Met1–Leu44 is disordered. The segment covering Ile7–Pro19 has biased composition (basic and acidic residues). A compositionally biased stretch (low complexity) spans Arg24–Gly43. At Thr61 the chain carries Phosphothreonine. Doublecortin domains follow at residues Lys72–Thr158 and Lys196–Asp279. Composition is skewed to low complexity over residues Lys301 to Ser311 and Thr323 to Ser346. Residues Lys301 to Pro375 are disordered. Polar residues predominate over residues Ile353–Asn364. The residue at position 361 (Ser361) is a Phosphoserine. The Protein kinase domain maps to Tyr393–Val650. Residues Ile399–Val407 and Lys422 contribute to the ATP site. Asp514 acts as the Proton acceptor in catalysis. Position 646 is a phosphoserine (Ser646). Thr665 carries the post-translational modification Phosphothreonine. A disordered region spans residues Gln707 to Asp756. Residues Pro719–Pro740 are compositionally biased toward pro residues.

It belongs to the protein kinase superfamily. CAMK Ser/Thr protein kinase family. CaMK subfamily. Binds to and stabilizes microtubules. Interacts with MAPK8IP1/JIP-1, MAPK8IP2/JIP-2, MAPK9/JNK2, PPP1R9B/NEURABIN-2 and actin. Post-translationally, autophosphorylated. As to expression, expressed in the central and peripheral nervous system including the brain, spinal cord, cranial and dorsal root ganglia and in the parasympathetic ganglia. Present in neurons, but not in glial cells, in most forebrain areas. Strong expression in the hippocampal CA1 pyramidal cell layer. Expressed in the photoreceptor sensory cilium complex and in eyes. Also detected in individual cells of the olfactory epithelium.

It is found in the cytoplasm. The protein resides in the cytoskeleton. It catalyses the reaction L-seryl-[protein] + ATP = O-phospho-L-seryl-[protein] + ADP + H(+). It carries out the reaction L-threonyl-[protein] + ATP = O-phospho-L-threonyl-[protein] + ADP + H(+). Functionally, protein kinase with a significantly reduced Ca(2+)+/CAM affinity and dependence compared to other members of the CaMK family. May play a role in the down-regulation of CRE-dependent gene activation probably by phosphorylation of the CREB coactivator CRTC2/TORC2 and the resulting retention of TORC2 in the cytoplasm. The sequence is that of Serine/threonine-protein kinase DCLK2 (Dclk2) from Mus musculus (Mouse).